A 295-amino-acid polypeptide reads, in one-letter code: UDP-N-acetylenolpyruvoylglucosamine reductase (295 aa).

The FAD-binding PCMH-type domain occupies 23–188 (KVGGPADFLA…ISAKFALKPG (166 aa)). Residue R167 is part of the active site. The active-site Proton donor is S217. E287 is a catalytic residue.

It belongs to the MurB family. FAD is required as a cofactor.

The protein resides in the cytoplasm. It carries out the reaction UDP-N-acetyl-alpha-D-muramate + NADP(+) = UDP-N-acetyl-3-O-(1-carboxyvinyl)-alpha-D-glucosamine + NADPH + H(+). The protein operates within cell wall biogenesis; peptidoglycan biosynthesis. Functionally, cell wall formation. This Streptococcus pyogenes serotype M18 (strain MGAS8232) protein is UDP-N-acetylenolpyruvoylglucosamine reductase.